The primary structure comprises 260 residues: MFIKNGLLLSLATSVLATHGARSHSQAATSKLSKRFTFPIPNSEGSVTLDEVYEIDGETFDGGMKTYGRGVSCTGQDEGGDSDAVFIVKNGGTLKNVIIGSDQIEGVHCEGSCTIENVWWEAVCEDALSLKTGDGPFNVVGGGAQGADDKVIQHNGGGTVSISDFTVYDFGKLYRSCGNCGDQYERHVVIEGVTAVDGKYLVGINSNYGDTATIDSATCATDVKTICAEYKGTDNNDEEPEEVSDGPSDYCIYTEPLSEC.

The N-terminal stretch at 1 to 17 (MFIKNGLLLSLATSVLA) is a signal peptide.

Belongs to the polysaccharide lyase 3 family. Ca(2+) serves as cofactor.

It localises to the secreted. It catalyses the reaction Eliminative cleavage of (1-&gt;4)-alpha-D-galacturonan to give oligosaccharides with 4-deoxy-alpha-D-galact-4-enuronosyl groups at their non-reducing ends.. Functionally, pectinolytic enzyme consist of four classes of enzymes: pectin lyase, polygalacturonase, pectin methylesterase and rhamnogalacturonase. Among pectinolytic enzymes, pectin lyase is the most important in depolymerization of pectin, since it cleaves internal glycosidic bonds of highly methylated pectins. Favors pectate, the anion, over pectin, the methyl ester. The polypeptide is Pectate lyase H (plyH) (Emericella nidulans (strain FGSC A4 / ATCC 38163 / CBS 112.46 / NRRL 194 / M139) (Aspergillus nidulans)).